Reading from the N-terminus, the 207-residue chain is Large ribosomal subunit protein uL4 (207 aa).

The segment at 49–78 (HAVKNRSAVSGGGRKPWRQKGTGRARQGSI) is disordered.

Belongs to the universal ribosomal protein uL4 family. Part of the 50S ribosomal subunit.

One of the primary rRNA binding proteins, this protein initially binds near the 5'-end of the 23S rRNA. It is important during the early stages of 50S assembly. It makes multiple contacts with different domains of the 23S rRNA in the assembled 50S subunit and ribosome. Functionally, forms part of the polypeptide exit tunnel. The chain is Large ribosomal subunit protein uL4 from Streptococcus pneumoniae serotype 19F (strain G54).